A 180-amino-acid polypeptide reads, in one-letter code: Hypoxanthine-guanine phosphoribosyltransferase (180 aa).

Residues lysine 43 and glycine 44 each coordinate diphosphate. Mg(2+)-binding residues include glutamate 99 and aspartate 100. The active-site Proton acceptor is the aspartate 103. GMP-binding positions include lysine 131, 152–153, and aspartate 159; that span reads FI. Residue arginine 165 coordinates diphosphate.

The protein belongs to the purine/pyrimidine phosphoribosyltransferase family. Mg(2+) serves as cofactor.

It is found in the cytoplasm. The enzyme catalyses IMP + diphosphate = hypoxanthine + 5-phospho-alpha-D-ribose 1-diphosphate. It carries out the reaction GMP + diphosphate = guanine + 5-phospho-alpha-D-ribose 1-diphosphate. It functions in the pathway purine metabolism; IMP biosynthesis via salvage pathway; IMP from hypoxanthine: step 1/1. The protein operates within purine metabolism; GMP biosynthesis via salvage pathway; GMP from guanine: step 1/1. Its function is as follows. Purine salvage pathway enzyme that catalyzes the transfer of the ribosyl-5-phosphate group from 5-phospho-alpha-D-ribose 1-diphosphate (PRPP) to the N9 position of the 6-oxopurines hypoxanthine and guanine to form the corresponding ribonucleotides IMP (inosine 5'-monophosphate) and GMP (guanosine 5'-monophosphate), with the release of PPi. This chain is Hypoxanthine-guanine phosphoribosyltransferase (hpt), found in Streptococcus pyogenes serotype M3 (strain ATCC BAA-595 / MGAS315).